The sequence spans 209 residues: SelT-like protein (209 aa).

An N-terminal signal peptide occupies residues 1–22; the sequence is MDKTQLILLGLPIFLLCSDLFN. C64 and C67 form a disulfide bridge.

Belongs to the SelWTH family. SELT subfamily.

This Arabidopsis thaliana (Mouse-ear cress) protein is SelT-like protein.